Consider the following 261-residue polypeptide: Snake venom serine protease (261 aa).

Positions 1 to 20 (MALIGVLANLLILCLSYART) are cleaved as a signal peptide. Residues 21–24 (APDR) constitute a propeptide that is removed on maturation. The Peptidase S1 domain maps to 25–249 (IIGGLECNQN…YIDWIQDIMA (225 aa)). Disulfide bonds link C31-C163, C50-C66, C98-C256, C142-C210, C174-C189, and C200-C225. The Charge relay system role is filled by H65. The N-linked (GlcNAc...) asparagine glycan is linked to N103. D110 acts as the Charge relay system in catalysis. Residues N117 and N121 are each glycosylated (N-linked (GlcNAc...) asparagine). The active-site Charge relay system is S204.

This sequence belongs to the peptidase S1 family. Snake venom subfamily. As to quaternary structure, monomer. In terms of tissue distribution, expressed by the venom gland.

Its subcellular location is the secreted. In terms of biological role, snake venom serine protease that may act in the hemostasis system of the prey. This Philodryas olfersii (Green snake) protein is Snake venom serine protease.